Reading from the N-terminus, the 107-residue chain is Large ribosomal subunit protein uL24 (107 aa).

Belongs to the universal ribosomal protein uL24 family. In terms of assembly, part of the 50S ribosomal subunit.

Functionally, one of two assembly initiator proteins, it binds directly to the 5'-end of the 23S rRNA, where it nucleates assembly of the 50S subunit. One of the proteins that surrounds the polypeptide exit tunnel on the outside of the subunit. In Streptomyces griseus subsp. griseus (strain JCM 4626 / CBS 651.72 / NBRC 13350 / KCC S-0626 / ISP 5235), this protein is Large ribosomal subunit protein uL24.